The chain runs to 415 residues: MQLTAVGLNHQTAPLSIREKLAFAAACLPEAVRNLARSNAATEAVILSTCNRTELYCVGDSEEIIRWLADYHSLPIEEISPYLYTLGMQETVRHAFRVACGLDSMVLGEPQILGQIKDAVRVAQEQESMGKKLNALFQKTFSVAKEVRTDTAVGENSVSMASASVKLAEQIFPDIGDLNVLFIGAGEMIELVATYFAAKSPRLMTVANRTLARAQELCDKLGVNAEPCLLSDLPAILHEYDVVVSSTASQLPIVGKGMVERALKQRQSMPLFMLDLAVPRDIEAEVGDLNDAYLYTVDDMVNIVQSGKEARQKAAAAAETLVSEKVAEFVRQQQGRQSVPLIRALRDEGEKARKQVLENAMKQLAKGATAEEVLERLSIQLTNKLLHSPTQTLNKAGEEDKDLVHAVAQIYHLDK.

Residues 49–52 (TCNR), S104, 109–111 (EPQ), and Q115 contribute to the substrate site. C50 (nucleophile) is an active-site residue. 184 to 189 (GAGEMI) is a binding site for NADP(+).

The protein belongs to the glutamyl-tRNA reductase family. In terms of assembly, homodimer.

The enzyme catalyses (S)-4-amino-5-oxopentanoate + tRNA(Glu) + NADP(+) = L-glutamyl-tRNA(Glu) + NADPH + H(+). Its pathway is porphyrin-containing compound metabolism; protoporphyrin-IX biosynthesis; 5-aminolevulinate from L-glutamyl-tRNA(Glu): step 1/2. In terms of biological role, catalyzes the NADPH-dependent reduction of glutamyl-tRNA(Glu) to glutamate 1-semialdehyde (GSA). The polypeptide is Glutamyl-tRNA reductase (Neisseria meningitidis serogroup C / serotype 2a (strain ATCC 700532 / DSM 15464 / FAM18)).